We begin with the raw amino-acid sequence, 530 residues long: UDP-glucuronosyltransferase 1A8 (530 aa).

The first 25 residues, 1–25 (MARTGWTSPIPLCVSLLLTCGFAEA), serve as a signal peptide directing secretion. N-linked (GlcNAc...) asparagine glycosylation is found at N71, N292, and N344. Residues 488–504 (VIGFLLAVVLTVAFITF) form a helical membrane-spanning segment.

The protein belongs to the UDP-glycosyltransferase family. Homodimer. Homooligomer. Interacts with UGT1A1, UGT1A3, UGT1A4, UGT1A6, UGT1A7, UGT1A9 and UGT1A10 to form heterodimers. Isoform 1 interacts with isoform 2/i2 suggesting that oligomerization is involved in negative regulation of transferase activity by isoform 2. Isoform 1 also interacts with respective i2 isoforms of UGT1A1, UGT1A3, UGT1A4, UGT1A6, UGT1A7, UGT1A9 and UGT1A10. In terms of tissue distribution, expressed in kidney, colon and small intestine. Not expressed in liver. Expressed in liver, kidney, colon and small intestine.

It is found in the endoplasmic reticulum membrane. It catalyses the reaction glucuronate acceptor + UDP-alpha-D-glucuronate = acceptor beta-D-glucuronoside + UDP + H(+). The catalysed reaction is 17beta-estradiol + UDP-alpha-D-glucuronate = 17beta-estradiol 3-O-(beta-D-glucuronate) + UDP + H(+). It carries out the reaction 17alpha-estradiol + UDP-alpha-D-glucuronate = 17alpha-estradiol 3-O-(beta-D-glucuronate) + UDP + H(+). The enzyme catalyses estrone + UDP-alpha-D-glucuronate = estrone 3-O-(beta-D-glucuronate) + UDP + H(+). It catalyses the reaction 16alpha,17alpha-estriol + UDP-alpha-D-glucuronate = 16alpha,17alpha-estriol 3-O-(beta-D-glucuronate) + UDP + H(+). The catalysed reaction is 2-hydroxy-17beta-estradiol + UDP-alpha-D-glucuronate = 2-hydroxy-17beta-estradiol 3-O-(beta-D-glucuronate) + UDP + H(+). It carries out the reaction 2-hydroxy-17beta-estradiol + UDP-alpha-D-glucuronate = 17beta-estradiol 2-O-(beta-D-glucuronate) + UDP + H(+). The enzyme catalyses 2-hydroxyestrone + UDP-alpha-D-glucuronate = 2-hydroxyestrone 3-O-(beta-D-glucuronate) + UDP + H(+). It catalyses the reaction 4-hydroxy-17beta-estradiol + UDP-alpha-D-glucuronate = 4-hydroxy-17beta-estradiol 3-O-(beta-D-glucuronate) + UDP + H(+). The catalysed reaction is 4-hydroxy-17beta-estradiol + UDP-alpha-D-glucuronate = 17beta-estradiol 4-O-(beta-D-glucuronate) + UDP + H(+). It carries out the reaction 4-hydroxyestrone + UDP-alpha-D-glucuronate = 4-hydroxyestrone 3-O-(beta-D-glucuronate) + UDP + H(+). The enzyme catalyses 4-hydroxyestrone + UDP-alpha-D-glucuronate = estrone 4-O-(beta-D-glucuronate) + UDP + H(+). It catalyses the reaction 2-methoxy-17beta-estradiol + UDP-alpha-D-glucuronate = 2-methoxy-17beta-estradiol 3-O-(beta-D-glucuronate) + UDP + H(+). The catalysed reaction is 2-methoxyestrone + UDP-alpha-D-glucuronate = 2-methoxyestrone 3-O-(beta-D-glucuronate) + UDP + H(+). It carries out the reaction 4-methoxy-17beta-estradiol + UDP-alpha-D-glucuronate = 4-methoxy-17beta-estradiol 3-O-(beta-D-glucuronate) + UDP + H(+). The enzyme catalyses 4-methoxyestrone + UDP-alpha-D-glucuronate = 4-methoxyestrone 3-O-(beta-D-glucuronate) + UDP + H(+). It catalyses the reaction 17beta-hydroxy-5alpha-androstan-3-one + UDP-alpha-D-glucuronate = 5alpha-dihydrotestosterone 17-O-(beta-D-glucuronate) + UDP + H(+). The catalysed reaction is 5alpha-dihydrotestosterone 17-O-(beta-D-glucuronate) + UDP-alpha-D-glucuronate = 5alpha-dihydrotestosterone 17-O-[beta-D-glucuronosyl-(1-&gt;2)-glucuronate] + UDP + H(+). It carries out the reaction prunetin + UDP-alpha-D-glucuronate = prunetin-4'-O-beta-D-glucuronide + UDP. The enzyme catalyses prunetin + UDP-alpha-D-glucuronate = prunetin-5-O-beta-D-glucuronide + UDP. It catalyses the reaction candesartan + UDP-alpha-D-glucuronate = candesartan O-beta-D-glucuronoside + UDP. The catalysed reaction is mycophenolate + UDP-alpha-D-glucuronate = mycophenolate 7-O-beta-D-glucuronide + UDP + H(+). It carries out the reaction (E)-ferulate + UDP-alpha-D-glucuronate = (E)-4-O-(beta-D-glucuronosyl)-ferulate + UDP + H(+). The enzyme catalyses (E)-ferulate + UDP-alpha-D-glucuronate = (E)-ferulic acid beta-D-glucuronate ester + UDP. In terms of biological role, UDP-glucuronosyltransferase (UGT) that catalyzes phase II biotransformation reactions in which lipophilic substrates are conjugated with glucuronic acid to increase the metabolite's water solubility, thereby facilitating excretion into either the urine or bile. Essential for the elimination and detoxification of drugs, xenobiotics and endogenous compounds. Catalyzes the glucuronidation of endogenous steroid hormones such as androgens and estrogens. Produces dihydrotestosterone (DHT) diglucuronide from the DHT after two subsequent glucoronidation steps. Involved in the glucuronidation of the phytochemical ferulic acid at the phenolic or the carboxylic acid group. Also catalyzes the glucuronidation of the isoflavones genistein, daidzein, glycitein, formononetin, biochanin A and prunetin, which are phytoestrogens with anticancer and cardiovascular properties. Involved in the glucuronidation of the AGTR1 angiotensin receptor antagonist caderastan, a drug which can inhibit the effect of angiotensin II. Also metabolizes mycophenolate, an immunosuppressive agent. Lacks UGT glucuronidation activity but acts as a negative regulator of isoform 1. The protein is UDP-glucuronosyltransferase 1A8 of Homo sapiens (Human).